The following is an 883-amino-acid chain: Copper-transporting ATPase PAA2, chloroplastic (883 aa).

The transit peptide at 1–65 (MASNLLRFPL…TQSFESTESS (65 aa)) directs the protein to the chloroplast. The HMA domain maps to 76–146 (TPILLDVSGM…RLTESGFEAK (71 aa)). Residues Cys-87 and Cys-90 each coordinate Cu cation. Helical transmembrane passes span 179–199 (VAFA…HILH), 209–229 (GIWD…GALL), 250–270 (MNSL…ISLV), 274–294 (LEWD…VLLG), 445–465 (AIAG…FAFW), and 499–519 (VLVV…ILIG). Catalysis depends on Asp-548, which acts as the 4-aspartylphosphate intermediate. Residue 761–768 (GDGINDAP) coordinates ATP. 2 residues coordinate Mg(2+): Asp-762 and Asp-766. 2 consecutive transmembrane segments (helical) span residues 822-842 (LAWA…VLLP) and 846-866 (FAMT…FVVS).

This sequence belongs to the cation transport ATPase (P-type) (TC 3.A.3) family. Type IB subfamily. Expressed in the shoots only and not in the roots.

The protein localises to the plastid. Its subcellular location is the chloroplast thylakoid membrane. It carries out the reaction Cu(2+)(in) + ATP + H2O = Cu(2+)(out) + ADP + phosphate + H(+). Mediates copper transfer across the chloroplast thylakoid membrane. Required for copper delivery into the thylakoids lumen, which is essential for the function of copper proteins. This chain is Copper-transporting ATPase PAA2, chloroplastic (PAA2), found in Arabidopsis thaliana (Mouse-ear cress).